Reading from the N-terminus, the 238-residue chain is Dolichyldiphosphatase 1 (238 aa).

The next 4 helical transmembrane spans lie at 33-53, 100-120, 130-150, and 162-182; these read LAYLSLSPVFVIVGFVTLIIF, PSSHSQFMWFFSVYSFLFLYL, FLDLLWRHVLSLGLLAVAFLV, and WSQVLYGGIAGGLMAIAWFIF.

The protein belongs to the dolichyldiphosphatase family.

The protein resides in the endoplasmic reticulum membrane. It carries out the reaction a di-trans,poly-cis-dolichyl diphosphate + H2O = a di-trans,poly-cis-dolichyl phosphate + phosphate + H(+). Its pathway is protein modification; protein glycosylation. Its function is as follows. Required for efficient N-glycosylation. Necessary for maintaining optimal levels of dolichol-linked oligosaccharides. Hydrolyzes dolichyl pyrophosphate at a very high rate and dolichyl monophosphate at a much lower rate. Does not act on phosphatidate. The chain is Dolichyldiphosphatase 1 (DOLPP1) from Homo sapiens (Human).